A 450-amino-acid polypeptide reads, in one-letter code: Molybdate-anion transporter (450 aa).

12 helical membrane passes run 1-21 (MLVTAYLAFVVLLASCLGLEL), 43-63 (LDFYQVYFLALAADWLQAPYL), 79-99 (ILYVCGLASTVLFGLVASSLV), 128-148 (FVLLVGRALGGLSTALLFSAF), 176-196 (FWNHVLAVAAGVAAEAVACWM), 198-218 (LGPVAPFVAAIPLLALAGALA), 249-269 (VLLLGTIQALFESVIFIFVFL), 278-298 (GAPLGIIFSSFMAASLLGSSL), 311-331 (PMHLLSLAVLIVVFSLFMLTF), 344-364 (FIAFLLIELACGLYFPSMSFL), 376-396 (GVLNWFRVPLHLLACLGLLVL), and 409-429 (FSICSAVMVMALLAVVGLFTV).

The protein belongs to the major facilitator superfamily.

The protein resides in the cell membrane. Functionally, mediates high-affinity intracellular uptake of the rare oligo-element molybdenum. The polypeptide is Molybdate-anion transporter (MFSD5) (Bos taurus (Bovine)).